A 370-amino-acid polypeptide reads, in one-letter code: Biotin synthase (370 aa).

One can recognise a Radical SAM core domain in the interval 79–314; that stretch reads CCGNVVDLCS…KQIIRYAGGR (236 aa). Cysteine 97, cysteine 101, and cysteine 104 together coordinate [4Fe-4S] cluster. Residues cysteine 142, cysteine 179, cysteine 239, and arginine 309 each coordinate [2Fe-2S] cluster.

Belongs to the radical SAM superfamily. Biotin synthase family. In terms of assembly, homodimer. Requires [4Fe-4S] cluster as cofactor. It depends on [2Fe-2S] cluster as a cofactor.

The enzyme catalyses (4R,5S)-dethiobiotin + (sulfur carrier)-SH + 2 reduced [2Fe-2S]-[ferredoxin] + 2 S-adenosyl-L-methionine = (sulfur carrier)-H + biotin + 2 5'-deoxyadenosine + 2 L-methionine + 2 oxidized [2Fe-2S]-[ferredoxin]. It functions in the pathway cofactor biosynthesis; biotin biosynthesis; biotin from 7,8-diaminononanoate: step 2/2. Its function is as follows. Catalyzes the conversion of dethiobiotin (DTB) to biotin by the insertion of a sulfur atom into dethiobiotin via a radical-based mechanism. In Trichodesmium erythraeum (strain IMS101), this protein is Biotin synthase.